Here is a 337-residue protein sequence, read N- to C-terminus: Transcription initiation factor IIB (337 aa).

The TFIIB-type zinc finger occupies 36 to 68 (SVQSVCPECGSRQLVHDYERAELVCQNCGLVLD). Positions 41, 44, 60, and 63 each coordinate Zn(2+). A run of 2 repeats spans residues 154–237 (SELD…SREL) and 248–329 (DYVP…ELAE).

This sequence belongs to the TFIIB family.

In terms of biological role, stabilizes TBP binding to an archaeal box-A promoter. Also responsible for recruiting RNA polymerase II to the pre-initiation complex (DNA-TBP-TFIIB). This chain is Transcription initiation factor IIB, found in Methanoculleus marisnigri (strain ATCC 35101 / DSM 1498 / JR1).